Here is a 631-residue protein sequence, read N- to C-terminus: Phosphomethylpyrimidine synthase (631 aa).

Substrate-binding positions include Asn239, Met268, Tyr297, His333, 353–355 (SRG), 394–397 (DGLR), and Glu433. A Zn(2+)-binding site is contributed by His437. Tyr460 contacts substrate. Zn(2+) is bound at residue His501. Cys581, Cys584, and Cys589 together coordinate [4Fe-4S] cluster.

This sequence belongs to the ThiC family. In terms of assembly, homodimer. The cofactor is [4Fe-4S] cluster.

It catalyses the reaction 5-amino-1-(5-phospho-beta-D-ribosyl)imidazole + S-adenosyl-L-methionine = 4-amino-2-methyl-5-(phosphooxymethyl)pyrimidine + CO + 5'-deoxyadenosine + formate + L-methionine + 3 H(+). Its pathway is cofactor biosynthesis; thiamine diphosphate biosynthesis. Its function is as follows. Catalyzes the synthesis of the hydroxymethylpyrimidine phosphate (HMP-P) moiety of thiamine from aminoimidazole ribotide (AIR) in a radical S-adenosyl-L-methionine (SAM)-dependent reaction. This chain is Phosphomethylpyrimidine synthase, found in Escherichia coli (strain SMS-3-5 / SECEC).